The primary structure comprises 201 residues: Imidazole glycerol phosphate synthase subunit HisH (201 aa).

Residues 2-201 (KVVILDTGCA…ARLLKNFLEM (200 aa)) form the Glutamine amidotransferase type-1 domain. Cysteine 77 (nucleophile) is an active-site residue. Catalysis depends on residues histidine 183 and glutamate 185.

In terms of assembly, heterodimer of HisH and HisF.

Its subcellular location is the cytoplasm. It catalyses the reaction 5-[(5-phospho-1-deoxy-D-ribulos-1-ylimino)methylamino]-1-(5-phospho-beta-D-ribosyl)imidazole-4-carboxamide + L-glutamine = D-erythro-1-(imidazol-4-yl)glycerol 3-phosphate + 5-amino-1-(5-phospho-beta-D-ribosyl)imidazole-4-carboxamide + L-glutamate + H(+). The catalysed reaction is L-glutamine + H2O = L-glutamate + NH4(+). Its pathway is amino-acid biosynthesis; L-histidine biosynthesis; L-histidine from 5-phospho-alpha-D-ribose 1-diphosphate: step 5/9. Functionally, IGPS catalyzes the conversion of PRFAR and glutamine to IGP, AICAR and glutamate. The HisH subunit catalyzes the hydrolysis of glutamine to glutamate and ammonia as part of the synthesis of IGP and AICAR. The resulting ammonia molecule is channeled to the active site of HisF. This is Imidazole glycerol phosphate synthase subunit HisH from Photorhabdus laumondii subsp. laumondii (strain DSM 15139 / CIP 105565 / TT01) (Photorhabdus luminescens subsp. laumondii).